A 157-amino-acid polypeptide reads, in one-letter code: UPF0225 protein PSPTO_4127 (157 aa).

The protein belongs to the UPF0225 family.

The sequence is that of UPF0225 protein PSPTO_4127 from Pseudomonas syringae pv. tomato (strain ATCC BAA-871 / DC3000).